A 257-amino-acid polypeptide reads, in one-letter code: Adenosylcobinamide-GDP ribazoletransferase (257 aa).

A run of 4 helical transmembrane segments spans residues 28 to 48, 50 to 70, 110 to 130, and 199 to 219; these read FARSPWTFPVVGYLVGGLVAL, LFVPAPAPTVALAFVLAVYAV, VALALVVLGLATAALGLVEVA, and WPQVLPGLAALLVALATAALV.

It belongs to the CobS family. Mg(2+) is required as a cofactor.

It localises to the cell membrane. The enzyme catalyses alpha-ribazole + adenosylcob(III)inamide-GDP = adenosylcob(III)alamin + GMP + H(+). The catalysed reaction is alpha-ribazole 5'-phosphate + adenosylcob(III)inamide-GDP = adenosylcob(III)alamin 5'-phosphate + GMP + H(+). Its pathway is cofactor biosynthesis; adenosylcobalamin biosynthesis; adenosylcobalamin from cob(II)yrinate a,c-diamide: step 7/7. Its function is as follows. Joins adenosylcobinamide-GDP and alpha-ribazole to generate adenosylcobalamin (Ado-cobalamin). Also synthesizes adenosylcobalamin 5'-phosphate from adenosylcobinamide-GDP and alpha-ribazole 5'-phosphate. This chain is Adenosylcobinamide-GDP ribazoletransferase, found in Halorubrum lacusprofundi (strain ATCC 49239 / DSM 5036 / JCM 8891 / ACAM 34).